Reading from the N-terminus, the 145-residue chain is ATP synthase epsilon chain (145 aa).

The segment at 100 to 123 (RAQRAKQRAEDAIKTASEKHDSDE) is disordered. The span at 106–123 (QRAEDAIKTASEKHDSDE) shows a compositional bias: basic and acidic residues.

It belongs to the ATPase epsilon chain family. As to quaternary structure, F-type ATPases have 2 components, CF(1) - the catalytic core - and CF(0) - the membrane proton channel. CF(1) has five subunits: alpha(3), beta(3), gamma(1), delta(1), epsilon(1). CF(0) has three main subunits: a, b and c.

It is found in the cell membrane. In terms of biological role, produces ATP from ADP in the presence of a proton gradient across the membrane. The sequence is that of ATP synthase epsilon chain from Latilactobacillus sakei subsp. sakei (strain 23K) (Lactobacillus sakei subsp. sakei).